A 513-amino-acid chain; its full sequence is MQLNSTEISELIKKRIAQFDVVSEARNTGTIVSVSDGIIRIHGLSEVMQGEMIALPGNRYAMALNLERDSVGAVVMGPYADLAEGMEVQCTGRILEVPVGRGLLGRVVNTLGEPIDGKGEIENDGFSPVEVIAPGVIDRKSVDQPVQTGYKAVDSMVPIGRGQRELIIGDRQTGKTALAIDAIINQRDSGIKCIYVAIGQKASTIANVVRKLEEHSALQNTIVVVASASESAALQYLAPYSGCAMGEYFRDRGEDALIIYDDLSKQAVAYRQISLLLRRPPGREAFPGDVFYLHSRLLERASRVNEEYVERFTNGEVKGKTGSLTALPIIETQAGDVSAFVPTNVISITDGQIFLESNLFNSGIRPAVNPGISVSRVGGSAQTKVIKKLAGGIRTALAQYRELAAFAQFASDLDDATRKQLSHGQKVTELLKQKQYSPLSVAQQALVLFAVEFGYLEEVDLDRIGSFESALLEYANHNYADFMRELTQSGNYNDEIKESLKGILDSFKANSAW.

Position 169–176 (169–176 (GDRQTGKT)) interacts with ATP.

Belongs to the ATPase alpha/beta chains family. F-type ATPases have 2 components, CF(1) - the catalytic core - and CF(0) - the membrane proton channel. CF(1) has five subunits: alpha(3), beta(3), gamma(1), delta(1), epsilon(1). CF(0) has three main subunits: a(1), b(2) and c(9-12). The alpha and beta chains form an alternating ring which encloses part of the gamma chain. CF(1) is attached to CF(0) by a central stalk formed by the gamma and epsilon chains, while a peripheral stalk is formed by the delta and b chains.

The protein localises to the cell inner membrane. It catalyses the reaction ATP + H2O + 4 H(+)(in) = ADP + phosphate + 5 H(+)(out). Functionally, produces ATP from ADP in the presence of a proton gradient across the membrane. The alpha chain is a regulatory subunit. The protein is ATP synthase subunit alpha of Pasteurella multocida (strain Pm70).